A 360-amino-acid chain; its full sequence is DNA integrity scanning protein DisA (360 aa).

The DAC domain maps to 9–147 (DDEIIEVLRM…GSRKYILRET (139 aa)). Residues Gly76, Leu94, and 107–111 (TRHKT) each bind ATP.

Belongs to the DisA family. As to quaternary structure, homooctamer. The cofactor is Mg(2+).

The catalysed reaction is 2 ATP = 3',3'-c-di-AMP + 2 diphosphate. Functionally, participates in a DNA-damage check-point that is active prior to asymmetric division when DNA is damaged. DisA forms globular foci that rapidly scan along the chromosomes during sporulation, searching for lesions. When a lesion is present, DisA pauses at the lesion site. This triggers a cellular response that culminates in a temporary block in sporulation initiation. In terms of biological role, also has diadenylate cyclase activity, catalyzing the condensation of 2 ATP molecules into cyclic di-AMP (c-di-AMP). c-di-AMP acts as a signaling molecule that couples DNA integrity with progression of sporulation. The rise in c-di-AMP level generated by DisA while scanning the chromosome, operates as a positive signal that advances sporulation; upon encountering a lesion, the DisA focus arrests at the damaged site and halts c-di-AMP synthesis. The polypeptide is DNA integrity scanning protein DisA (Acetivibrio thermocellus (strain ATCC 27405 / DSM 1237 / JCM 9322 / NBRC 103400 / NCIMB 10682 / NRRL B-4536 / VPI 7372) (Clostridium thermocellum)).